A 227-amino-acid chain; its full sequence is Ribonuclease S-5 (227 aa).

The N-terminal stretch at 1–27 (MGITGMVYVVTMVFLLIVLILSSSTVG) is a signal peptide. Gln-36 lines the RNA pocket. Cys-42 and Cys-49 are oxidised to a cystine. Asn-45 is a glycosylation site (N-linked (GlcNAc...) asparagine). Residues His-60, 97-98 (NV), Phe-107, 110-111 (KE), and 114-115 (KH) contribute to the RNA site. His-60 serves as the catalytic Proton donor. Cys-75 and Cys-118 are joined by a disulfide. Glu-111 is a catalytic residue. His-115 (proton acceptor) is an active-site residue. N-linked (GlcNAc...) asparagine glycosylation is present at Asn-143. 2 cysteine pairs are disulfide-bonded: Cys-182–Cys-220 and Cys-197–Cys-208.

The protein belongs to the RNase T2 family. Post-translationally, N-glycan at Asn-45 consists of disaccharide (GlcNAc-GlcNAc). N-linked core structure at Asn-143 contains xylose.

The enzyme catalyses a ribonucleotidyl-ribonucleotide-RNA + H2O = a 3'-end 3'-phospho-ribonucleotide-RNA + a 5'-end dephospho-ribonucleoside-RNA + H(+). Functionally, self-incompatibility (SI) is the inherited ability of a flowering plant to prevent self-fertilization by discriminating between self and non-self pollen during pollination. In many species, self-incompatibility is controlled by the single, multiallelic locus S. The chain is Ribonuclease S-5 from Pyrus pyrifolia (Chinese pear).